Here is a 481-residue protein sequence, read N- to C-terminus: Glutamate-1-semialdehyde 2,1-aminomutase, chloroplastic (481 aa).

The interval 18–40 (NQTPKWGFSPSHRRCNPSSSSSA) is disordered. Position 321 is an N6-(pyridoxal phosphate)lysine (Lys-321).

The protein belongs to the class-III pyridoxal-phosphate-dependent aminotransferase family. HemL subfamily. In terms of assembly, homodimer. It depends on pyridoxal 5'-phosphate as a cofactor.

The protein resides in the plastid. It is found in the chloroplast. It catalyses the reaction (S)-4-amino-5-oxopentanoate = 5-aminolevulinate. It participates in porphyrin-containing compound metabolism; protoporphyrin-IX biosynthesis; 5-aminolevulinate from L-glutamyl-tRNA(Glu): step 2/2. It functions in the pathway porphyrin-containing compound metabolism; chlorophyll biosynthesis. The protein is Glutamate-1-semialdehyde 2,1-aminomutase, chloroplastic of Solanum lycopersicum (Tomato).